The sequence spans 158 residues: Endoribonuclease YbeY (158 aa).

Residues H119, H123, and H129 each contribute to the Zn(2+) site.

It belongs to the endoribonuclease YbeY family. Zn(2+) serves as cofactor.

Its subcellular location is the cytoplasm. In terms of biological role, single strand-specific metallo-endoribonuclease involved in late-stage 70S ribosome quality control and in maturation of the 3' terminus of the 16S rRNA. This chain is Endoribonuclease YbeY, found in Acinetobacter baumannii (strain AB307-0294).